The sequence spans 100 residues: NADH-quinone oxidoreductase subunit K (100 aa).

3 helical membrane-spanning segments follow: residues 4 to 24 (LNYG…SLLI), 29 to 49 (IFIL…FILI), and 60 to 80 (VLYI…LAIF).

Belongs to the complex I subunit 4L family. In terms of assembly, NDH-1 is composed of 13 different subunits. Subunits NuoA, H, J, K, L, M, N constitute the membrane sector of the complex.

The protein localises to the cell membrane. It catalyses the reaction a quinone + NADH + 5 H(+)(in) = a quinol + NAD(+) + 4 H(+)(out). Functionally, NDH-1 shuttles electrons from NADH, via FMN and iron-sulfur (Fe-S) centers, to quinones in the respiratory chain. The immediate electron acceptor for the enzyme in this species is believed to be ubiquinone. Couples the redox reaction to proton translocation (for every two electrons transferred, four hydrogen ions are translocated across the cytoplasmic membrane), and thus conserves the redox energy in a proton gradient. The chain is NADH-quinone oxidoreductase subunit K from Buchnera aphidicola subsp. Cinara cedri (strain Cc).